Here is a 197-residue protein sequence, read N- to C-terminus: Brain acid soluble protein 1 homolog (197 aa).

The segment covering 1-11 (MGGKLSKKKKG) has biased composition (basic residues). The disordered stretch occupies residues 1-197 (MGGKLSKKKK…NKEQAVAVQD (197 aa)). Gly2 carries N-myristoyl glycine lipidation. Basic and acidic residues-rich tracts occupy residues 15–26 (NDEKAKEKDAKT) and 35–44 (EAPKENKEDA). Low complexity predominate over residues 45-66 (AAATETTNDTAAAAKEATPTAD). The span at 72 to 87 (PKEEEKSAAPPKKEEP) shows a compositional bias: basic and acidic residues. The span at 88–98 (AANANANAPKA) shows a compositional bias: low complexity. 2 stretches are compositionally biased toward basic and acidic residues: residues 99–113 (SDAK…EPAK) and 134–144 (NEKEPAKEAAK). Residues 145–155 (DPAPAVAAASE) are compositionally biased toward low complexity. A compositionally biased stretch (basic and acidic residues) spans 156–166 (SKPDAESKKTE).

It belongs to the BASP1 family.

The protein localises to the cell membrane. This Danio rerio (Zebrafish) protein is Brain acid soluble protein 1 homolog (basp1).